Consider the following 165-residue polypeptide: Large ribosomal subunit protein uL10 (165 aa).

This sequence belongs to the universal ribosomal protein uL10 family. Part of the ribosomal stalk of the 50S ribosomal subunit. The N-terminus interacts with L11 and the large rRNA to form the base of the stalk. The C-terminus forms an elongated spine to which L12 dimers bind in a sequential fashion forming a multimeric L10(L12)X complex.

Its function is as follows. Forms part of the ribosomal stalk, playing a central role in the interaction of the ribosome with GTP-bound translation factors. The chain is Large ribosomal subunit protein uL10 from Citrobacter koseri (strain ATCC BAA-895 / CDC 4225-83 / SGSC4696).